We begin with the raw amino-acid sequence, 314 residues long: ATP synthase gamma chain (314 aa).

It belongs to the ATPase gamma chain family. In terms of assembly, F-type ATPases have 2 components, CF(1) - the catalytic core - and CF(0) - the membrane proton channel. CF(1) has five subunits: alpha(3), beta(3), gamma(1), delta(1), epsilon(1). CF(0) has three main subunits: a, b and c.

The protein localises to the cellular thylakoid membrane. Functionally, produces ATP from ADP in the presence of a proton gradient across the membrane. The gamma chain is believed to be important in regulating ATPase activity and the flow of protons through the CF(0) complex. The polypeptide is ATP synthase gamma chain (Gloeothece citriformis (strain PCC 7424) (Cyanothece sp. (strain PCC 7424))).